We begin with the raw amino-acid sequence, 369 residues long: UDP-N-acetylglucosamine--N-acetylmuramyl-(pentapeptide) pyrophosphoryl-undecaprenol N-acetylglucosamine transferase (369 aa).

Residues T16 to G18, N130, R171, S196, and Q297 contribute to the UDP-N-acetyl-alpha-D-glucosamine site.

The protein belongs to the glycosyltransferase 28 family. MurG subfamily.

It is found in the cell inner membrane. The enzyme catalyses di-trans,octa-cis-undecaprenyl diphospho-N-acetyl-alpha-D-muramoyl-L-alanyl-D-glutamyl-meso-2,6-diaminopimeloyl-D-alanyl-D-alanine + UDP-N-acetyl-alpha-D-glucosamine = di-trans,octa-cis-undecaprenyl diphospho-[N-acetyl-alpha-D-glucosaminyl-(1-&gt;4)]-N-acetyl-alpha-D-muramoyl-L-alanyl-D-glutamyl-meso-2,6-diaminopimeloyl-D-alanyl-D-alanine + UDP + H(+). It participates in cell wall biogenesis; peptidoglycan biosynthesis. Functionally, cell wall formation. Catalyzes the transfer of a GlcNAc subunit on undecaprenyl-pyrophosphoryl-MurNAc-pentapeptide (lipid intermediate I) to form undecaprenyl-pyrophosphoryl-MurNAc-(pentapeptide)GlcNAc (lipid intermediate II). The chain is UDP-N-acetylglucosamine--N-acetylmuramyl-(pentapeptide) pyrophosphoryl-undecaprenol N-acetylglucosamine transferase from Desulfotalea psychrophila (strain LSv54 / DSM 12343).